The primary structure comprises 312 residues: Sulfate adenylyltransferase subunit 2 (312 aa).

The protein belongs to the PAPS reductase family. CysD subfamily. Heterodimer composed of CysD, the smaller subunit, and CysN.

It carries out the reaction sulfate + ATP + H(+) = adenosine 5'-phosphosulfate + diphosphate. It functions in the pathway sulfur metabolism; hydrogen sulfide biosynthesis; sulfite from sulfate: step 1/3. Its function is as follows. With CysN forms the ATP sulfurylase (ATPS) that catalyzes the adenylation of sulfate producing adenosine 5'-phosphosulfate (APS) and diphosphate, the first enzymatic step in sulfur assimilation pathway. APS synthesis involves the formation of a high-energy phosphoric-sulfuric acid anhydride bond driven by GTP hydrolysis by CysN coupled to ATP hydrolysis by CysD. In Methylobacterium nodulans (strain LMG 21967 / CNCM I-2342 / ORS 2060), this protein is Sulfate adenylyltransferase subunit 2.